The following is a 188-amino-acid chain: Protein-L-isoaspartate O-methyltransferase (188 aa).

Ser33 is an active-site residue.

Belongs to the methyltransferase superfamily. L-isoaspartyl/D-aspartyl protein methyltransferase family.

Its subcellular location is the cytoplasm. It catalyses the reaction [protein]-L-isoaspartate + S-adenosyl-L-methionine = [protein]-L-isoaspartate alpha-methyl ester + S-adenosyl-L-homocysteine. Catalyzes the methyl esterification of L-isoaspartyl residues in peptides and proteins that result from spontaneous decomposition of normal L-aspartyl and L-asparaginyl residues. It plays a role in the repair and/or degradation of damaged proteins. In Methanocella arvoryzae (strain DSM 22066 / NBRC 105507 / MRE50), this protein is Protein-L-isoaspartate O-methyltransferase.